The chain runs to 150 residues: Globin-3 (150 aa).

In terms of domain architecture, Globin spans 11 to 150; sequence PLTAADKTKI…IICILLNSAY (140 aa). The heme b site is built by His-74 and His-106.

This sequence belongs to the globin family. In terms of assembly, monomer.

This is Globin-3 from Mordacia mordax (Southern hemisphere lamprey).